We begin with the raw amino-acid sequence, 132 residues long: NAD(P)H-quinone oxidoreductase subunit 3 (132 aa).

The next 3 helical transmembrane spans lie at 22–42 (FLGF…ASAL), 76–96 (MFAL…PWAV), and 101–121 (LGLL…VALV).

This sequence belongs to the complex I subunit 3 family. NDH-1 can be composed of about 15 different subunits; different subcomplexes with different compositions have been identified which probably have different functions.

The protein resides in the cellular thylakoid membrane. The enzyme catalyses a plastoquinone + NADH + (n+1) H(+)(in) = a plastoquinol + NAD(+) + n H(+)(out). It carries out the reaction a plastoquinone + NADPH + (n+1) H(+)(in) = a plastoquinol + NADP(+) + n H(+)(out). NDH-1 shuttles electrons from an unknown electron donor, via FMN and iron-sulfur (Fe-S) centers, to quinones in the respiratory and/or the photosynthetic chain. The immediate electron acceptor for the enzyme in this species is believed to be plastoquinone. Couples the redox reaction to proton translocation, and thus conserves the redox energy in a proton gradient. Cyanobacterial NDH-1 also plays a role in inorganic carbon-concentration. In Thermosynechococcus vestitus (strain NIES-2133 / IAM M-273 / BP-1), this protein is NAD(P)H-quinone oxidoreductase subunit 3 (ndhC).